The chain runs to 97 residues: MTTKVITAEDVRKVAHLARLAIDESEIEALTQQLDSILDYVNQLSELDVTEVPPTTRAIEVSNVTRPDVLAPWPNREDLLAIAPEREDDFFRVPKIM.

The protein belongs to the GatC family. Heterotrimer of A, B and C subunits.

It carries out the reaction L-glutamyl-tRNA(Gln) + L-glutamine + ATP + H2O = L-glutaminyl-tRNA(Gln) + L-glutamate + ADP + phosphate + H(+). The enzyme catalyses L-aspartyl-tRNA(Asn) + L-glutamine + ATP + H2O = L-asparaginyl-tRNA(Asn) + L-glutamate + ADP + phosphate + 2 H(+). Functionally, allows the formation of correctly charged Asn-tRNA(Asn) or Gln-tRNA(Gln) through the transamidation of misacylated Asp-tRNA(Asn) or Glu-tRNA(Gln) in organisms which lack either or both of asparaginyl-tRNA or glutaminyl-tRNA synthetases. The reaction takes place in the presence of glutamine and ATP through an activated phospho-Asp-tRNA(Asn) or phospho-Glu-tRNA(Gln). The sequence is that of Aspartyl/glutamyl-tRNA(Asn/Gln) amidotransferase subunit C from Thermosynechococcus vestitus (strain NIES-2133 / IAM M-273 / BP-1).